Here is a 267-residue protein sequence, read N- to C-terminus: PF03932 family protein CutC (267 aa).

This sequence belongs to the CutC family.

It is found in the cytoplasm. The polypeptide is PF03932 family protein CutC (Xylella fastidiosa (strain Temecula1 / ATCC 700964)).